Reading from the N-terminus, the 358-residue chain is Myb family transcription factor APL (358 aa).

The region spanning 31–91 is the HTH myb-type domain; the sequence is TDPKPRLRWT…HLQKFRLGKQ (61 aa). A DNA-binding region (H-T-H motif) is located at residues 62–87; sequence PKTIMRVMGVKGLTLYHLKSHLQKFR. Residues 125–145 are a coiled coil; it reads RNMNEMQMEVQRRLHEQLEVQ. Positions 138–143 match the LHEQLE motif; sequence LHEQLE. Positions 313–358 are disordered; it reads RKSGLSGDEGNNGGKLLERPSPRRSPLSPMMNPNGGLIQGRNSPFG.

This sequence belongs to the MYB-CC family. In terms of tissue distribution, expressed in shoots and roots, specifically in the developing protophloem sieve elements. Detected in phloem and/or cambium. Expressed in the phloem tissues of various organs, including leaves and cotyledons, during vegetative growth.

The protein localises to the nucleus. Transcription factor required for phloem identity. Has a dual role both in promoting phloem differentiation and in repressing xylem differentiation during vascular development. Regulates the expression of the transcription factor NAC045 (AC A4VCM0). May activate the transcription of specific genes involved in phosphate uptake or assimilation. Promotes flowering through transcriptional activation of both FT and its transport machinery component, FTIP1. The protein is Myb family transcription factor APL of Arabidopsis thaliana (Mouse-ear cress).